A 262-amino-acid polypeptide reads, in one-letter code: 3-deoxy-manno-octulosonate cytidylyltransferase (262 aa).

Belongs to the KdsB family.

The protein resides in the cytoplasm. The catalysed reaction is 3-deoxy-alpha-D-manno-oct-2-ulosonate + CTP = CMP-3-deoxy-beta-D-manno-octulosonate + diphosphate. Its pathway is nucleotide-sugar biosynthesis; CMP-3-deoxy-D-manno-octulosonate biosynthesis; CMP-3-deoxy-D-manno-octulosonate from 3-deoxy-D-manno-octulosonate and CTP: step 1/1. The protein operates within bacterial outer membrane biogenesis; lipopolysaccharide biosynthesis. Activates KDO (a required 8-carbon sugar) for incorporation into bacterial lipopolysaccharide in Gram-negative bacteria. This is 3-deoxy-manno-octulosonate cytidylyltransferase from Acidovorax ebreus (strain TPSY) (Diaphorobacter sp. (strain TPSY)).